The primary structure comprises 321 residues: Phospho-N-acetylmuramoyl-pentapeptide-transferase (321 aa).

Transmembrane regions (helical) follow at residues 1–21, 50–70, 76–96, 112–132, 140–160, 176–196, 200–220, 225–245, 250–270, and 300–320; these read MLFI…PILI, MGGL…IFFV, IILL…DDYI, FLAQ…FHLV, IPFT…IVFW, GLAT…SFVL, AIGA…PYNL, VFMG…ISIM, LSLL…MLQV, and VVTV…WIGV.

Belongs to the glycosyltransferase 4 family. MraY subfamily. The cofactor is Mg(2+).

It localises to the cell membrane. It carries out the reaction UDP-N-acetyl-alpha-D-muramoyl-L-alanyl-gamma-D-glutamyl-L-lysyl-D-alanyl-D-alanine + di-trans,octa-cis-undecaprenyl phosphate = Mur2Ac(oyl-L-Ala-gamma-D-Glu-L-Lys-D-Ala-D-Ala)-di-trans,octa-cis-undecaprenyl diphosphate + UMP. It participates in cell wall biogenesis; peptidoglycan biosynthesis. Catalyzes the initial step of the lipid cycle reactions in the biosynthesis of the cell wall peptidoglycan: transfers peptidoglycan precursor phospho-MurNAc-pentapeptide from UDP-MurNAc-pentapeptide onto the lipid carrier undecaprenyl phosphate, yielding undecaprenyl-pyrophosphoryl-MurNAc-pentapeptide, known as lipid I. The sequence is that of Phospho-N-acetylmuramoyl-pentapeptide-transferase from Staphylococcus haemolyticus (strain JCSC1435).